Reading from the N-terminus, the 271-residue chain is Probable WRKY transcription factor 69 (271 aa).

2 disordered regions span residues methionine 1–lysine 47 and proline 130–alanine 166. A compositionally biased stretch (acidic residues) spans glutamate 9–tyrosine 18. The segment at residues glycine 64–proline 130 is a DNA-binding region (WRKY).

Belongs to the WRKY group II-e family.

The protein localises to the nucleus. In terms of biological role, transcription factor. Interacts specifically with the W box (5'-(T)TGAC[CT]-3'), a frequently occurring elicitor-responsive cis-acting element. The chain is Probable WRKY transcription factor 69 (WRKY69) from Arabidopsis thaliana (Mouse-ear cress).